Consider the following 101-residue polypeptide: Large ribosomal subunit protein uL24 (101 aa).

Belongs to the universal ribosomal protein uL24 family. Part of the 50S ribosomal subunit.

Functionally, one of two assembly initiator proteins, it binds directly to the 5'-end of the 23S rRNA, where it nucleates assembly of the 50S subunit. Its function is as follows. One of the proteins that surrounds the polypeptide exit tunnel on the outside of the subunit. This chain is Large ribosomal subunit protein uL24, found in Streptococcus suis (strain 98HAH33).